Consider the following 481-residue polypeptide: Cardiolipin synthase A (481 aa).

2 helical membrane-spanning segments follow: residues 10 to 30 (FFGY…LHAL) and 40 to 60 (IAWA…YLIF). 2 consecutive PLD phosphodiesterase domains span residues 220-247 (VNFR…GDEY) and 394-421 (QPGF…DNRS). Catalysis depends on residues His-225, Lys-227, Asp-232, His-399, Lys-401, and Asp-406.

This sequence belongs to the phospholipase D family. Cardiolipin synthase subfamily. ClsA sub-subfamily.

It is found in the cell inner membrane. It catalyses the reaction 2 a 1,2-diacyl-sn-glycero-3-phospho-(1'-sn-glycerol) = a cardiolipin + glycerol. Catalyzes the reversible phosphatidyl group transfer from one phosphatidylglycerol molecule to another to form cardiolipin (CL) (diphosphatidylglycerol) and glycerol. The polypeptide is Cardiolipin synthase A (Pseudomonas putida (strain ATCC 47054 / DSM 6125 / CFBP 8728 / NCIMB 11950 / KT2440)).